We begin with the raw amino-acid sequence, 272 residues long: Small ribosomal subunit protein uS3 (272 aa).

The KH type-2 domain occupies 43–111 (IRELMTTGME…QIQLNILEVK (69 aa)). The tract at residues 218–272 (AKEAAQPSGRGRGGERRGGGERRRRNDRAERAPRQENAGAGAETPAAAPAEGGNA) is disordered. Basic and acidic residues predominate over residues 229 to 238 (RGGERRGGGE). Positions 253-272 (ENAGAGAETPAAAPAEGGNA) are enriched in low complexity.

The protein belongs to the universal ribosomal protein uS3 family. Part of the 30S ribosomal subunit. Forms a tight complex with proteins S10 and S14.

Functionally, binds the lower part of the 30S subunit head. Binds mRNA in the 70S ribosome, positioning it for translation. This chain is Small ribosomal subunit protein uS3, found in Micrococcus luteus (strain ATCC 4698 / DSM 20030 / JCM 1464 / CCM 169 / CCUG 5858 / IAM 1056 / NBRC 3333 / NCIMB 9278 / NCTC 2665 / VKM Ac-2230) (Micrococcus lysodeikticus).